The following is a 476-amino-acid chain: Glutathione synthetase (476 aa).

Arg117 contributes to the substrate binding site. Glu137 serves as a coordination point for ATP. Residues Glu137 and Asn139 each coordinate Mg(2+). Substrate contacts are provided by residues 141-144 (ISSS), 211-213 (ERN), Gln217, and 267-270 (RAGY). ATP contacts are provided by residues Lys308, 367-376 (KPQREGGGNN), Tyr378, 400-403 (MDKI), and Glu426. A Mg(2+)-binding site is contributed by Glu371. Residue Arg452 participates in substrate binding. The ATP site is built by Lys454 and Glu460. A substrate-binding site is contributed by 463-464 (VA).

Belongs to the eukaryotic GSH synthase family. In terms of assembly, homodimer. Mg(2+) serves as cofactor.

The catalysed reaction is gamma-L-glutamyl-L-cysteine + glycine + ATP = glutathione + ADP + phosphate + H(+). Its pathway is sulfur metabolism; glutathione biosynthesis; glutathione from L-cysteine and L-glutamate: step 2/2. This chain is Glutathione synthetase (gshB), found in Dictyostelium discoideum (Social amoeba).